The chain runs to 330 residues: Putative glycosyltransferase HI_0258 (330 aa).

Over residues 1 to 31 the composition is skewed to basic and acidic residues; it reads MTDRQTDRQTDRQTDRQTDRQTDRQTDRQTD. Residues 1 to 32 form a disordered region; sequence MTDRQTDRQTDRQTDRQTDRQTDRQTDRQTDG. UDP contacts are provided by residues 44–49 and 140–141; these read SSDHYY and DV. Mn(2+) contacts are provided by Asp140, Asp142, and His270. 270–276 is a UDP binding site; sequence HYCGPNK.

The protein belongs to the glycosyltransferase 8 family.

The chain is Putative glycosyltransferase HI_0258 from Haemophilus influenzae (strain ATCC 51907 / DSM 11121 / KW20 / Rd).